The primary structure comprises 151 residues: MARLHSGKRGSSGSTRPLRTEVPEWVSMSAEDIEAKIVEMAKDGKQSAIIGNILRDMYGVPSVKLVTGKSVSSIMKEAGFYTEVPEDLFNLMKKAINLRNHLENNPRDTHSTVGLKLIESKIRRLVKYYRGTKVLPAKWRYSPDTARLLVE.

The tract at residues 1–20 is disordered; sequence MARLHSGKRGSSGSTRPLRT.

The protein belongs to the universal ribosomal protein uS15 family. In terms of assembly, part of the 30S ribosomal subunit.

This Methanococcus maripaludis (strain C7 / ATCC BAA-1331) protein is Small ribosomal subunit protein uS15.